The chain runs to 112 residues: Nitrogen regulatory protein P-II (112 aa).

Tyr51 bears the O-UMP-tyrosine mark.

Belongs to the P(II) protein family. In terms of assembly, homotrimer. Uridylylated/deuridylylated by GlnD.

In terms of biological role, P-II indirectly controls the transcription of the glutamine synthetase gene (GlnA). P-II prevents NR-II-catalyzed conversion of NR-I to NR-I-phosphate, the transcriptional activator of GlnA. When P-II is uridylylated to P-II-UMP, these events are reversed. When the ratio of Gln to 2-ketoglutarate decreases, P-II is uridylylated to P-II-UMP, which causes the deadenylation of glutamine synthetase by GlnE, so activating the enzyme. The polypeptide is Nitrogen regulatory protein P-II (glnB) (Haemophilus influenzae (strain ATCC 51907 / DSM 11121 / KW20 / Rd)).